The following is a 1464-amino-acid chain: Nuclear pore complex protein NUP155 (1464 aa).

An N-acetylserine modification is found at S2.

Belongs to the non-repetitive/WGA-negative nucleoporin family. In terms of assembly, part of the nuclear pore complex (NPC). The NPC has an eight-fold symmetrical structure comprising a central transport channel and two rings, the cytoplasmic and nuclear rings, to which eight filaments are attached. The cytoplasmic filaments have loose ends, while the nuclear filaments are joined in a distal ring, forming a nuclear basket. NPCs are highly dynamic in configuration and composition, and can be devided in 3 subcomplexes, the NUP62 subcomplex, the NUP107-160 subcomplex and the NUP93 subcomplex, containing approximately 30 different nucleoporin proteins.

It is found in the nucleus. Its subcellular location is the nuclear pore complex. In terms of biological role, major component of the nuclear pore complex (NPC). The sequence is that of Nuclear pore complex protein NUP155 from Arabidopsis thaliana (Mouse-ear cress).